The chain runs to 117 residues: Hainantoxin-XV-2 (117 aa).

The N-terminal stretch at 1-20 is a signal peptide; it reads MKLCAVIIASLLVCVAVASS. A disordered region spans residues 20 to 55; it reads SSDNQKEFAQEKEMTREETQSLGEHEKDDEVTGSEE. The propeptide occupies 21–56; that stretch reads SDNQKEFAQEKEMTREETQSLGEHEKDDEVTGSEER. Over residues 23–55 the composition is skewed to basic and acidic residues; sequence NQKEFAQEKEMTREETQSLGEHEKDDEVTGSEE. Intrachain disulfides connect cysteine 58-cysteine 72, cysteine 65-cysteine 78, cysteine 69-cysteine 115, and cysteine 71-cysteine 91.

This sequence belongs to the neurotoxin 03 (Tx2) family. 02 subfamily. HNTX-XV sub-subfamily. As to expression, expressed by the venom gland.

The protein resides in the secreted. Putative ion channel inhibitor. The protein is Hainantoxin-XV-2 of Cyriopagopus hainanus (Chinese bird spider).